Reading from the N-terminus, the 454-residue chain is MSPLQLNGKSRGTSPGNAEPLPIFDALCRSLPVGTADEQFWWKLTGRHLARMMLEAGYPEHRQVECLLFHRFKVVPTFGPQPQSAEPWYRSRVAASAGDGAPISYSWRFGTADRKPYIRNYIEPLGPLTGTAADPNNDVATRAFLQDLTTTLPNLDLSLFWTFEPHLVSRFSDKADREKYAGPSVLTGVELSPDSDAIEIKMYLYPRIPEQISQLLSTIIPKAMREAYGDDVCLDSLNLVKDFLSNHPDGRQLSPRGTTGIDCCKVQDSRVKFYVATNNTSFDHIATVMTIGGRRPLSTEVLDKLRELWYELNGLPSDFPTSEQVPTDQGQEGPSGHHGVGFYYDIQPRLALPDVKAFINVRKHAKSDLAAAETVIGFLERHGQGHHNPRAYLNVLRDIVPAEELETRVGAQAFYSVAVKKEELDITAYFIPQVYRRFASVQVELNGQRRSRFE.

The protein belongs to the tryptophan dimethylallyltransferase family.

Its pathway is secondary metabolite biosynthesis. In terms of biological role, prenyltransferase; part of the gene cluster that mediates the biosynthesis of neosartoricin, a prenylated anthracenone that exhibits T-cell antiproliferative activity, suggestive of a physiological role as an immunosuppressive agent. The non-reducing polyketide synthase nscA probably synthesizes and cyclizes the decaketide backbone. The hydrolase nscB then mediates the product release through hydrolysis followed by spontaneous decarboxylation. The prenyltransferase nscD catalyzes the addition of the dimethylallyl group to the aromatic C5. The FAD-dependent monooxygenase nscC is then responsible for the stereospecific hydroxylation at C2. There is no gene encoding O-acetyltransferase in the nsc gene cluster; thus, the last step of 2-O-acetylation leading to neosartoricin may be catalyzed by an unidentified O-acetyltransferase. The sequence is that of Prenyltransferase nscD from Neosartorya fischeri (strain ATCC 1020 / DSM 3700 / CBS 544.65 / FGSC A1164 / JCM 1740 / NRRL 181 / WB 181) (Aspergillus fischerianus).